Reading from the N-terminus, the 195-residue chain is Fe/S biogenesis protein NfuA (195 aa).

2 residues coordinate [4Fe-4S] cluster: Cys-152 and Cys-155.

It belongs to the NfuA family. In terms of assembly, homodimer. The cofactor is [4Fe-4S] cluster.

Functionally, involved in iron-sulfur cluster biogenesis. Binds a 4Fe-4S cluster, can transfer this cluster to apoproteins, and thereby intervenes in the maturation of Fe/S proteins. Could also act as a scaffold/chaperone for damaged Fe/S proteins. This is Fe/S biogenesis protein NfuA from Vibrio cholerae serotype O1 (strain ATCC 39315 / El Tor Inaba N16961).